Here is a 236-residue protein sequence, read N- to C-terminus: TVP38/TMEM64 family membrane protein YdjX (236 aa).

The next 5 membrane-spanning stretches (helical) occupy residues 7–27 (FLFACLIFALVIYAIHAFGLF), 50–70 (LYILLFIIATLLLLPGSILVI), 72–92 (GGIVFGPLLGTLLSLIAATLA), 156–176 (IAFWPYTLISALTTLPGIVIY), and 192–212 (FILQLCLAGLALFILVQLAKL). Residues 73-183 (GIVFGPLLGT…VIYTVMASDL (111 aa)) are VTT domain.

Belongs to the TVP38/TMEM64 family.

It is found in the cell membrane. This Escherichia coli (strain K12) protein is TVP38/TMEM64 family membrane protein YdjX (ydjX).